The chain runs to 241 residues: Urease accessory protein UreF 1 (241 aa).

It belongs to the UreF family. In terms of assembly, ureD, UreF and UreG form a complex that acts as a GTP-hydrolysis-dependent molecular chaperone, activating the urease apoprotein by helping to assemble the nickel containing metallocenter of UreC. The UreE protein probably delivers the nickel.

Its subcellular location is the cytoplasm. Its function is as follows. Required for maturation of urease via the functional incorporation of the urease nickel metallocenter. In Brucella melitensis biotype 1 (strain ATCC 23456 / CCUG 17765 / NCTC 10094 / 16M), this protein is Urease accessory protein UreF 1.